The primary structure comprises 815 residues: Bifunctional purine biosynthetic protein purD (815 aa).

The GARS stretch occupies residues 6–452; the sequence is NILVIGSGSR…YRKDIGQKAL (447 aa). Residues 113 to 343 form the ATP-grasp domain; sequence KDFMARNNIP…LFEIVLACIE (231 aa). An ATP-binding site is contributed by 139-200; it reads IESLNYKIVL…EEFLDGEECS (62 aa). Mg(2+)-binding residues include E313 and N315. The tract at residues 469–801 is AIRS; that stretch reads VSYSESGVDI…KVYKIGKIIN (333 aa).

The protein in the N-terminal section; belongs to the GARS family. In the C-terminal section; belongs to the AIR synthase family. The cofactor is Mg(2+). Requires Mn(2+) as cofactor.

The protein resides in the cytoplasm. Its subcellular location is the cytosol. It carries out the reaction 5-phospho-beta-D-ribosylamine + glycine + ATP = N(1)-(5-phospho-beta-D-ribosyl)glycinamide + ADP + phosphate + H(+). It catalyses the reaction 2-formamido-N(1)-(5-O-phospho-beta-D-ribosyl)acetamidine + ATP = 5-amino-1-(5-phospho-beta-D-ribosyl)imidazole + ADP + phosphate + H(+). The protein operates within purine metabolism; IMP biosynthesis via de novo pathway; 5-amino-1-(5-phospho-D-ribosyl)imidazole from N(2)-formyl-N(1)-(5-phospho-D-ribosyl)glycinamide: step 2/2. It functions in the pathway purine metabolism; IMP biosynthesis via de novo pathway; N(1)-(5-phospho-D-ribosyl)glycinamide from 5-phospho-alpha-D-ribose 1-diphosphate: step 2/2. Its function is as follows. Catalyzes the second and fifth step in the 'de novo' purine biosynthesis pathway; contains phosphoribosylamine--glycine ligase (GARS) and phosphoribosylformylglycinamidine cyclo-ligase (AIRS) activities. This chain is Bifunctional purine biosynthetic protein purD (purD), found in Dictyostelium discoideum (Social amoeba).